A 244-amino-acid chain; its full sequence is MILYPAIDLLDGRVVRLHKGAFDAVTDYGDDPMRVAEQFGEAGAVWVHIVDLSGARDGARRQGALIRSLCETGLRVQTGGGVRSAEDIEDLLAAGVERVIIGSLAVTDTNRVAGWLQNYGGDRITLALDVRQIGGQYRPALKGWTDMADTTLDDVISAYEGTGLAHALVTDIGRDGDLSGPNIALYKRLATDYPNIDWQASGGVSSLDDLRAARAAGAAGAITGKALYEGRFTVGEAIACLRDA.

Residue Asp-8 is the Proton acceptor of the active site. Asp-129 serves as the catalytic Proton donor.

It belongs to the HisA/HisF family.

The protein localises to the cytoplasm. The catalysed reaction is 1-(5-phospho-beta-D-ribosyl)-5-[(5-phospho-beta-D-ribosylamino)methylideneamino]imidazole-4-carboxamide = 5-[(5-phospho-1-deoxy-D-ribulos-1-ylimino)methylamino]-1-(5-phospho-beta-D-ribosyl)imidazole-4-carboxamide. It participates in amino-acid biosynthesis; L-histidine biosynthesis; L-histidine from 5-phospho-alpha-D-ribose 1-diphosphate: step 4/9. The sequence is that of 1-(5-phosphoribosyl)-5-[(5-phosphoribosylamino)methylideneamino] imidazole-4-carboxamide isomerase from Maricaulis maris (strain MCS10) (Caulobacter maris).